The sequence spans 493 residues: MRIEFVPVDTQAGATAALAVLAHEGAALSPEARAANEATGGALARAIAGGRFTGAKGQTLDIVAPNGLEAARVVLVGVDGSGAVEPEAVELAAASAFQAVKTSGVVELVLKLGADAETAARAAFGARLAAYRFDKYRTTEKAEKKPSVQVVKIAAADPVKAQKAYEPLAALADAIVFSRNLVSEPANILHPEEFAARAKGLESLGLEVEILGEAEMAKLGMGSLLGVGQGSVRESQLVIMKWMGAADKSAQPIAFVGKGVCFDTGGISIKPADGMEDMKWDMGGAAAVAGVMHALAGRKAKVNAIGVLGLVENMPDGNAQRPGDVVTSMSGQTIEVINTDAEGRLVLADALWYTQERFKPQFMIDLATLTGAIIISLGHDYAGLFSNNDGLSEKLLAAGKAERESLWRLPLPAAYEKQIESPIADMKNIGGRPAGSITAGLFLQKFVNGVPWAHLDIASVAWKKPSADPTVPDGAVGYGVRLLNRLVADAYEG.

Residues lysine 258 and aspartate 263 each coordinate Mn(2+). Lysine 270 is a catalytic residue. Mn(2+) is bound by residues aspartate 281, aspartate 340, and glutamate 342. The active site involves arginine 344.

The protein belongs to the peptidase M17 family. It depends on Mn(2+) as a cofactor.

Its subcellular location is the cytoplasm. It catalyses the reaction Release of an N-terminal amino acid, Xaa-|-Yaa-, in which Xaa is preferably Leu, but may be other amino acids including Pro although not Arg or Lys, and Yaa may be Pro. Amino acid amides and methyl esters are also readily hydrolyzed, but rates on arylamides are exceedingly low.. The catalysed reaction is Release of an N-terminal amino acid, preferentially leucine, but not glutamic or aspartic acids.. Its function is as follows. Presumably involved in the processing and regular turnover of intracellular proteins. Catalyzes the removal of unsubstituted N-terminal amino acids from various peptides. This chain is Probable cytosol aminopeptidase, found in Caulobacter vibrioides (strain ATCC 19089 / CIP 103742 / CB 15) (Caulobacter crescentus).